Reading from the N-terminus, the 357-residue chain is UPF0283 membrane protein BOV_0999 (357 aa).

The interval 1 to 36 (MSDKTPRKPTAFRLEQPARVSAASEQEEPRRPRAVK) is disordered. The span at 27–36 (EEPRRPRAVK) shows a compositional bias: basic and acidic residues. Helical transmembrane passes span 78–98 (ILFG…TEDL) and 109–129 (LGWT…AIIL).

Belongs to the UPF0283 family.

The protein localises to the cell inner membrane. This is UPF0283 membrane protein BOV_0999 from Brucella ovis (strain ATCC 25840 / 63/290 / NCTC 10512).